The primary structure comprises 90 residues: Small ribosomal subunit protein uS15 (90 aa).

This sequence belongs to the universal ribosomal protein uS15 family. In terms of assembly, part of the 30S ribosomal subunit. Forms a bridge to the 50S subunit in the 70S ribosome, contacting the 23S rRNA.

In terms of biological role, one of the primary rRNA binding proteins, it binds directly to 16S rRNA where it helps nucleate assembly of the platform of the 30S subunit by binding and bridging several RNA helices of the 16S rRNA. Forms an intersubunit bridge (bridge B4) with the 23S rRNA of the 50S subunit in the ribosome. The chain is Small ribosomal subunit protein uS15 from Campylobacter concisus (strain 13826).